A 197-amino-acid chain; its full sequence is Recombination protein RecR (197 aa).

The segment at 56–71 adopts a C4-type zinc-finger fold; sequence CQRCHSFSDEAVCPLC. Residues 79-174 enclose the Toprim domain; the sequence is TLLCVVETAA…KVTRLAQGVP (96 aa).

Belongs to the RecR family.

May play a role in DNA repair. It seems to be involved in an RecBC-independent recombinational process of DNA repair. It may act with RecF and RecO. The chain is Recombination protein RecR from Psychrobacter cryohalolentis (strain ATCC BAA-1226 / DSM 17306 / VKM B-2378 / K5).